Consider the following 101-residue polypeptide: Small ribosomal subunit protein uS14 (101 aa).

Belongs to the universal ribosomal protein uS14 family. As to quaternary structure, part of the 30S ribosomal subunit. Contacts proteins S3 and S10.

Binds 16S rRNA, required for the assembly of 30S particles and may also be responsible for determining the conformation of the 16S rRNA at the A site. This chain is Small ribosomal subunit protein uS14, found in Shewanella amazonensis (strain ATCC BAA-1098 / SB2B).